A 55-amino-acid polypeptide reads, in one-letter code: Large ribosomal subunit protein bL33 (55 aa).

A compositionally biased stretch (basic and acidic residues) spans methionine 1 to leucine 11. A disordered region spans residues methionine 1 to lysine 27. Residues threonine 14 to threonine 24 show a composition bias toward polar residues.

The protein belongs to the bacterial ribosomal protein bL33 family.

In Herminiimonas arsenicoxydans, this protein is Large ribosomal subunit protein bL33.